The sequence spans 481 residues: Aspartyl/glutamyl-tRNA(Asn/Gln) amidotransferase subunit B (481 aa).

The protein belongs to the GatB/GatE family. GatB subfamily. In terms of assembly, heterotrimer of A, B and C subunits.

The enzyme catalyses L-glutamyl-tRNA(Gln) + L-glutamine + ATP + H2O = L-glutaminyl-tRNA(Gln) + L-glutamate + ADP + phosphate + H(+). It carries out the reaction L-aspartyl-tRNA(Asn) + L-glutamine + ATP + H2O = L-asparaginyl-tRNA(Asn) + L-glutamate + ADP + phosphate + 2 H(+). Functionally, allows the formation of correctly charged Asn-tRNA(Asn) or Gln-tRNA(Gln) through the transamidation of misacylated Asp-tRNA(Asn) or Glu-tRNA(Gln) in organisms which lack either or both of asparaginyl-tRNA or glutaminyl-tRNA synthetases. The reaction takes place in the presence of glutamine and ATP through an activated phospho-Asp-tRNA(Asn) or phospho-Glu-tRNA(Gln). The protein is Aspartyl/glutamyl-tRNA(Asn/Gln) amidotransferase subunit B of Pseudomonas putida (strain W619).